The sequence spans 324 residues: MKGIDIYSGQGSVDFNAVKESGVEVVYIKATEGLTYTDSTYKDFYDGAKNAGLKIGFYHYLRANDPTSEAEHFFNTISGLSLDCKCAIDVEVTLGQSIDQISSNVRKFADYLINKGLDVCVYTYTNFYKDNLNSTVKDLPLWIAEYGVSKPNIDASYVGFQYSDSGSVNGISGSADLDEFSEGILVGGTVVIDPGQGGDDNIKAIQQDLNILLKRGLEVDGIEGPETEAAIKDFQSIMGLTVDGIWGTNTSGAAQQIFSRPLDGVAYPHYEYATRYIQYRVGASVDGTFGSGTKAKVAAWQSNQGLMADGVVGSATWSKLLDEN.

Residues aspartate 5 and glutamate 91 contribute to the active site. 5 consecutive repeat copies span residues leucine 212–phenylalanine 234, glutamine 235–alanine 254, glutamine 255–isoleucine 277, glutamine 278–tryptophan 300, and glutamine 301–asparagine 324. The interval leucine 212–asparagine 324 is 5 X 23 AA tandem repeats.

It belongs to the glycosyl hydrolase 25 family. Monomer.

The protein localises to the secreted. The protein resides in the cytoplasm. It carries out the reaction Hydrolysis of (1-&gt;4)-beta-linkages between N-acetylmuramic acid and N-acetyl-D-glucosamine residues in a peptidoglycan and between N-acetyl-D-glucosamine residues in chitodextrins.. This chain is Autolytic lysozyme (lyc), found in Clostridium acetobutylicum (strain ATCC 824 / DSM 792 / JCM 1419 / IAM 19013 / LMG 5710 / NBRC 13948 / NRRL B-527 / VKM B-1787 / 2291 / W).